The chain runs to 130 residues: Small ribosomal subunit protein uS9 (130 aa).

Belongs to the universal ribosomal protein uS9 family.

The protein is Small ribosomal subunit protein uS9 of Alkalilimnicola ehrlichii (strain ATCC BAA-1101 / DSM 17681 / MLHE-1).